Reading from the N-terminus, the 66-residue chain is Large ribosomal subunit protein bL33c (66 aa).

It belongs to the bacterial ribosomal protein bL33 family.

It localises to the plastid. Its subcellular location is the chloroplast. The polypeptide is Large ribosomal subunit protein bL33c (Platanus occidentalis (Sycamore)).